A 207-amino-acid polypeptide reads, in one-letter code: Frataxin, mitochondrial (207 aa).

Residues 1–40 (MWAFGGRAAVGLLPRTASRASAWVGNPRWREPIVTCGRRG) constitute a mitochondrion transit peptide.

The protein belongs to the frataxin family. As to quaternary structure, component of the mitochondrial core iron-sulfur cluster (ISC) complex composed of NFS1, LYRM4, NDUFAB1, ISCU, FXN, and FDX2; this complex is a heterohexamer containing two copies of each monomer. Homodimer. Monomer (probable predominant form). Oligomer. Monomers and polymeric aggregates of &gt;1 MDa have been isolated from mitochondria. A small fraction of heterologous overexpressed recombinant frataxin forms high-molecular weight aggregates that incorporate iron. Interacts with LYRM4. Interacts (via ferrous form) with ISCU; the interaction is possible when both are bound to the dimeric form of the cysteine desulfurase complex (NFS1:LYRM4) and the interaction enhances FXN interaction to the dimeric form of the cysteine desulfurase complex (NFS1:LYRM4). Interacts with FECH; one iron-bound FXN monomer seems to interact with a FECH homodimer. Interacts with SDHA and SDHB. Interacts with ACO2; the interaction is dependent on citrate. Interacts with HSPA9. Component of a complex composed of FXN, NFS1, LYRM4 and ISCU. In terms of assembly, interacts with ACO1. Interacts with ISCU (cytoplasmic form). In terms of processing, processed in two steps by mitochondrial processing peptidase (MPP). MPP first cleaves the precursor to intermediate form and subsequently converts the intermediate to yield frataxin mature form (frataxin(81-210)) which is the predominant form. The additional forms, frataxin(56-210) and frataxin(78-210), seem to be produced when the normal maturation process is impaired; their physiological relevance is unsure. In terms of tissue distribution, heart, liver, skeletal muscle, kidney, spleen and thymus. Weakly expressed in the brain and lung.

The protein localises to the mitochondrion. Its subcellular location is the cytoplasm. It is found in the cytosol. The enzyme catalyses 4 Fe(2+) + O2 + 4 H(+) = 4 Fe(3+) + 2 H2O. Functions as an activator of persulfide transfer to the scaffoding protein ISCU as component of the core iron-sulfur cluster (ISC) assembly complex and participates to the [2Fe-2S] cluster assembly. Accelerates sulfur transfer from NFS1 persulfide intermediate to ISCU and to small thiols such as L-cysteine and glutathione leading to persulfuration of these thiols and ultimately sulfide release. Binds ferrous ion and is released from FXN upon the addition of both L-cysteine and reduced FDX2 during [2Fe-2S] cluster assembly. The core iron-sulfur cluster (ISC) assembly complex is involved in the de novo synthesis of a [2Fe-2S] cluster, the first step of the mitochondrial iron-sulfur protein biogenesis. This process is initiated by the cysteine desulfurase complex (NFS1:LYRM4:NDUFAB1) that produces persulfide which is delivered on the scaffold protein ISCU in a FXN-dependent manner. Then this complex is stabilized by FDX2 which provides reducing equivalents to accomplish the [2Fe-2S] cluster assembly. Finally, the [2Fe-2S] cluster is transferred from ISCU to chaperone proteins, including HSCB, HSPA9 and GLRX5. May play a role in the protection against iron-catalyzed oxidative stress through its ability to catalyze the oxidation of Fe(2+) to Fe(3+); the oligomeric form but not the monomeric form has in vitro ferroxidase activity. May be able to store large amounts of iron in the form of a ferrihydrite mineral by oligomerization; however, the physiological relevance is unsure as reports are conflicting and the function has only been shown using heterologous overexpression systems. May function as an iron chaperone protein that protects the aconitase [4Fe-4S]2+ cluster from disassembly and promotes enzyme reactivation. May play a role as a high affinity iron binding partner for FECH that is capable of both delivering iron to ferrochelatase and mediating the terminal step in mitochondrial heme biosynthesis. Its function is as follows. Modulates the RNA-binding activity of ACO1. May be involved in the cytoplasmic iron-sulfur protein biogenesis. May contribute to oxidative stress resistance and overall cell survival. The chain is Frataxin, mitochondrial from Mus musculus (Mouse).